A 378-amino-acid polypeptide reads, in one-letter code: Flap endonuclease 1 (378 aa).

Residues 1 to 105 are N-domain; sequence MGIKGLNSII…HELDKRTERR (105 aa). Aspartate 34 is a Mg(2+) binding site. Residues arginine 47 and arginine 71 each coordinate DNA. Residues aspartate 87, glutamate 156, glutamate 158, aspartate 177, and aspartate 179 each contribute to the Mg(2+) site. Positions 120-251 are I-domain; that stretch reads EIMKHERRLV…VTALKLIKEH (132 aa). DNA is bound at residue glutamate 156. Residues glycine 229 and aspartate 231 each coordinate DNA. Aspartate 231 provides a ligand contact to Mg(2+). Positions 337–345 are interaction with PCNA; the sequence is VQGRLDSFF. The span at 356-367 shows a compositional bias: low complexity; it reads AASARKAQAAKK. The segment at 356-378 is disordered; it reads AASARKAQAAKKTNQKGKVLKRR. The span at 368–378 shows a compositional bias: basic residues; it reads TNQKGKVLKRR.

It belongs to the XPG/RAD2 endonuclease family. FEN1 subfamily. In terms of assembly, interacts with PCNA. Three molecules of FEN1 bind to one PCNA trimer with each molecule binding to one PCNA monomer. PCNA stimulates the nuclease activity without altering cleavage specificity. Mg(2+) is required as a cofactor. In terms of processing, phosphorylated. Phosphorylation upon DNA damage induces relocalization to the nuclear plasma.

Its subcellular location is the nucleus. The protein localises to the nucleolus. It is found in the nucleoplasm. The protein resides in the mitochondrion. Its function is as follows. Structure-specific nuclease with 5'-flap endonuclease and 5'-3' exonuclease activities involved in DNA replication and repair. During DNA replication, cleaves the 5'-overhanging flap structure that is generated by displacement synthesis when DNA polymerase encounters the 5'-end of a downstream Okazaki fragment. It enters the flap from the 5'-end and then tracks to cleave the flap base, leaving a nick for ligation. Also involved in the long patch base excision repair (LP-BER) pathway, by cleaving within the apurinic/apyrimidinic (AP) site-terminated flap. Acts as a genome stabilization factor that prevents flaps from equilibrating into structures that lead to duplications and deletions. Also possesses 5'-3' exonuclease activity on nicked or gapped double-stranded DNA, and exhibits RNase H activity. Also involved in replication and repair of rDNA and in repairing mitochondrial DNA. In Eremothecium gossypii (strain ATCC 10895 / CBS 109.51 / FGSC 9923 / NRRL Y-1056) (Yeast), this protein is Flap endonuclease 1.